A 261-amino-acid polypeptide reads, in one-letter code: Cytochrome c oxidase subunit 3 (261 aa).

At methionine 1–proline 15 the chain is on the mitochondrial matrix side. A helical transmembrane segment spans residues tryptophan 16 to tryptophan 34. The Mitochondrial intermembrane segment spans residues phenylalanine 35–threonine 40. A helical transmembrane segment spans residues threonine 41–threonine 66. Residues phenylalanine 67 to threonine 72 lie on the Mitochondrial matrix side of the membrane. The helical transmembrane segment at proline 73–serine 105 threads the bilayer. The Mitochondrial intermembrane portion of the chain corresponds to leucine 106–glutamate 128. A helical transmembrane segment spans residues valine 129–methionine 152. Residues glutamate 153–asparagine 155 are Mitochondrial matrix-facing. A helical membrane pass occupies residues arginine 156–glutamate 183. Residues alanine 184–aspartate 190 are Mitochondrial intermembrane-facing. A helical membrane pass occupies residues glycine 191–leucine 223. Residues lysine 224–histidine 232 lie on the Mitochondrial matrix side of the membrane. The helical transmembrane segment at phenylalanine 233–isoleucine 256 threads the bilayer. At tyrosine 257–serine 261 the chain is on the mitochondrial intermembrane side.

The protein belongs to the cytochrome c oxidase subunit 3 family. Component of the cytochrome c oxidase (complex IV, CIV), a multisubunit enzyme composed of 14 subunits. The complex is composed of a catalytic core of 3 subunits MT-CO1, MT-CO2 and MT-CO3, encoded in the mitochondrial DNA, and 11 supernumerary subunits COX4I, COX5A, COX5B, COX6A, COX6B, COX6C, COX7A, COX7B, COX7C, COX8 and NDUFA4, which are encoded in the nuclear genome. The complex exists as a monomer or a dimer and forms supercomplexes (SCs) in the inner mitochondrial membrane with NADH-ubiquinone oxidoreductase (complex I, CI) and ubiquinol-cytochrome c oxidoreductase (cytochrome b-c1 complex, complex III, CIII), resulting in different assemblies (supercomplex SCI(1)III(2)IV(1) and megacomplex MCI(2)III(2)IV(2)).

It localises to the mitochondrion inner membrane. The catalysed reaction is 4 Fe(II)-[cytochrome c] + O2 + 8 H(+)(in) = 4 Fe(III)-[cytochrome c] + 2 H2O + 4 H(+)(out). Its function is as follows. Component of the cytochrome c oxidase, the last enzyme in the mitochondrial electron transport chain which drives oxidative phosphorylation. The respiratory chain contains 3 multisubunit complexes succinate dehydrogenase (complex II, CII), ubiquinol-cytochrome c oxidoreductase (cytochrome b-c1 complex, complex III, CIII) and cytochrome c oxidase (complex IV, CIV), that cooperate to transfer electrons derived from NADH and succinate to molecular oxygen, creating an electrochemical gradient over the inner membrane that drives transmembrane transport and the ATP synthase. Cytochrome c oxidase is the component of the respiratory chain that catalyzes the reduction of oxygen to water. Electrons originating from reduced cytochrome c in the intermembrane space (IMS) are transferred via the dinuclear copper A center (CU(A)) of subunit 2 and heme A of subunit 1 to the active site in subunit 1, a binuclear center (BNC) formed by heme A3 and copper B (CU(B)). The BNC reduces molecular oxygen to 2 water molecules using 4 electrons from cytochrome c in the IMS and 4 protons from the mitochondrial matrix. The chain is Cytochrome c oxidase subunit 3 (MT-CO3) from Gazella cuvieri (Cuvier's gazelle).